The following is a 211-amino-acid chain: Mediator of RNA polymerase II transcription subunit 20 (211 aa).

This sequence belongs to the Mediator complex subunit 20 family. As to quaternary structure, component of the Mediator complex.

Its subcellular location is the nucleus. In terms of biological role, component of the Mediator complex, a coactivator involved in the regulated transcription of nearly all RNA polymerase II-dependent genes. Mediator functions as a bridge to convey information from gene-specific regulatory proteins to the basal RNA polymerase II transcription machinery. Mediator is recruited to promoters by direct interactions with regulatory proteins and serves as a scaffold for the assembly of a functional preinitiation complex with RNA polymerase II and the general transcription factors. The chain is Mediator of RNA polymerase II transcription subunit 20 (med20) from Xenopus laevis (African clawed frog).